Consider the following 163-residue polypeptide: NADH-quinone oxidoreductase subunit B (163 aa).

Positions 32, 33, 98, and 127 each coordinate [4Fe-4S] cluster.

This sequence belongs to the complex I 20 kDa subunit family. NDH-1 is composed of 14 different subunits. Subunits NuoB, C, D, E, F, and G constitute the peripheral sector of the complex. [4Fe-4S] cluster serves as cofactor.

The protein localises to the cell inner membrane. It carries out the reaction a quinone + NADH + 5 H(+)(in) = a quinol + NAD(+) + 4 H(+)(out). Its function is as follows. NDH-1 shuttles electrons from NADH, via FMN and iron-sulfur (Fe-S) centers, to quinones in the respiratory chain. Couples the redox reaction to proton translocation (for every two electrons transferred, four hydrogen ions are translocated across the cytoplasmic membrane), and thus conserves the redox energy in a proton gradient. In Pelobacter propionicus (strain DSM 2379 / NBRC 103807 / OttBd1), this protein is NADH-quinone oxidoreductase subunit B.